Reading from the N-terminus, the 827-residue chain is Leucine--tRNA ligase (827 aa).

Positions P42 to H52 match the 'HIGH' region motif. The 'KMSKS' region signature appears at K583–S587. ATP is bound at residue K586.

Belongs to the class-I aminoacyl-tRNA synthetase family.

It is found in the cytoplasm. It carries out the reaction tRNA(Leu) + L-leucine + ATP = L-leucyl-tRNA(Leu) + AMP + diphosphate. This Desulfitobacterium hafniense (strain DSM 10664 / DCB-2) protein is Leucine--tRNA ligase.